A 138-amino-acid polypeptide reads, in one-letter code: Cysteine desulfuration protein SufE (138 aa).

The active-site Cysteine persulfide intermediate is the Cys51.

It belongs to the SufE family. As to quaternary structure, homodimer. Interacts with SufS.

The protein resides in the cytoplasm. It functions in the pathway cofactor biosynthesis; iron-sulfur cluster biosynthesis. Its function is as follows. Participates in cysteine desulfuration mediated by SufS. Cysteine desulfuration mobilizes sulfur from L-cysteine to yield L-alanine and constitutes an essential step in sulfur metabolism for biosynthesis of a variety of sulfur-containing biomolecules. Functions as a sulfur acceptor for SufS, by mediating the direct transfer of the sulfur atom from the S-sulfanylcysteine of SufS, an intermediate product of cysteine desulfuration process. The sequence is that of Cysteine desulfuration protein SufE from Escherichia coli O8 (strain IAI1).